The following is a 415-amino-acid chain: 3-oxoacyl-[acyl-carrier-protein] synthase 2 (415 aa).

Residues 3-412 (KRRVVVTGMG…GTNGSLVFKK (410 aa)) enclose the Ketosynthase family 3 (KS3) domain. Catalysis depends on for beta-ketoacyl synthase activity residues C164, H304, and H342.

Belongs to the thiolase-like superfamily. Beta-ketoacyl-ACP synthases family. As to quaternary structure, homodimer.

The enzyme catalyses a fatty acyl-[ACP] + malonyl-[ACP] + H(+) = a 3-oxoacyl-[ACP] + holo-[ACP] + CO2. The catalysed reaction is (9Z)-hexadecenoyl-[ACP] + malonyl-[ACP] + H(+) = 3-oxo-(11Z)-octadecenoyl-[ACP] + holo-[ACP] + CO2. Its pathway is lipid metabolism; fatty acid biosynthesis. Its function is as follows. Involved in the type II fatty acid elongation cycle. Catalyzes the elongation of a wide range of acyl-ACP by the addition of two carbons from malonyl-ACP to an acyl acceptor. Can efficiently catalyze the conversion of palmitoleoyl-ACP (cis-hexadec-9-enoyl-ACP) to cis-vaccenoyl-ACP (cis-octadec-11-enoyl-ACP), an essential step in the thermal regulation of fatty acid composition. This Vibrio harveyi (Beneckea harveyi) protein is 3-oxoacyl-[acyl-carrier-protein] synthase 2 (fabF).